The sequence spans 510 residues: MWRLTGILGRALPRLLGPGFRGITPKPTSSDGSQTTSPTLPLTRLSFDRSGSHGSKRSRDPKCCGWKDAFHWMSAHVSPNTLRDAISWGTLAVLALHLARQIHFHAPLVAGPQPAERSWHSPLYRFLSSSWWHPHSSLRRHVLPRSDCPAPRNTGLREPRQGQEDHPSAPSQCLPSDSSLRSGLLNLPEEEPSDFDFLHASRDFASQAKAAEAHPPGGKNEQDKAKALPLEEAVTSIQQLFQLSVAITFNFLGTENIKTGDYTAAFSYFQKAADRGYSKAQYNVGLCLEHGRGTPRDLSKAILFYHLAAVQGHSLAQYRYARCLLQSPGSLSDPERERAVSLLKQAADSGLTEAQAFLGVLFTKEPHLDEQRAVKYLWLAASNGDSQSRFHLGICYEKGLGAQRNLGEAVKCYQQAAAMGNEPARERLRTLFNVEAAGPSHLATTGLKSFSSPSLCSLNTLLAGASGLPHASSTGNLGLLCRSGHLGASHGAPSRTIPSLERSLVRLGFG.

A mitochondrion-targeting transit peptide spans 1–23; the sequence is MWRLTGILGRALPRLLGPGFRGI. 2 disordered regions span residues 19 to 61 and 142 to 185; these read GFRG…SRDP and VLPR…SGLL. A propeptide spans 24-101 (extended MTS); sequence TPKPTSSDGS…AVLALHLARQ (78 aa). Low complexity predominate over residues 35 to 45; that stretch reads TTSPTLPLTRL. Composition is skewed to basic and acidic residues over residues 46 to 61 and 155 to 167; these read SFDR…SRDP and GLRE…EDHP. Polar residues predominate over residues 169–181; that stretch reads APSQCLPSDSSLR. 7 TPR repeats span residues 213-245, 246-278, 279-313, 314-351, 352-385, 386-423, and 471-499; these read AHPP…QLSV, AITF…RGYS, KAQY…VQGH, SLAQ…DSGL, TEAQ…SNGD, SQSR…GNEP, and ASST…TIPS. The SIFI-degron signature appears at 307-326; it reads LAAVQGHSLAQYRYARCLLQ.

This sequence belongs to the DELE1 family. Interacts with DAP3. In terms of assembly, interacts (via TPR repeats) with EIF2AK1/HRI; activating the protein kinase activity of EIF2AK1/HRI, thereby promoting the integrated stress response (ISR). As to quaternary structure, homooctamer; oligomerization is required to activate EIF2AK1/HRI. Interacts (via TPR repeats) with EIF2AK1/HRI; activating the protein kinase activity of EIF2AK1/HRI, thereby promoting the integrated stress response (ISR). Post-translationally, unstable protein in absence of stress: imported in the mitochondrial matrix following processing by the mitochondrial-processing peptidase (MPP), where it is degraded by LONP1. Stabilized in response to iron deficiency: iron deficiency impairs mitochondrial import, promoting localization at the mitochondrial surface and stabilization. Cleaved by OMA1 in response to mitochondrial stress, generating the DAP3-binding cell death enhancer 1 short form (DELE1(S) or S-DELE1) that accumulates in the cytosol and activates the protein kinase activity of EIF2AK1/HRI. Protein cleavage by OMA1 can take place at different positions, and apparently does not require a specific sequence motif. In terms of processing, ubiquitinated and degraded by the SIFI complex once the mitochondrial stress has been resolved, thereby providing stress response silencing. Within the SIFI complex, UBR4 initiates ubiquitin chain that are further elongated or branched by KCMF1.

The protein localises to the mitochondrion. It is found in the mitochondrion outer membrane. It localises to the mitochondrion inner membrane. Its subcellular location is the cytoplasm. The protein resides in the cytosol. Its function is as follows. Protein kinase activator that acts as a key activator of the integrated stress response (ISR) following various stresses, such as iron deficiency, mitochondrial stress or mitochondrial DNA breaks. Detects impaired protein import and processing in mitochondria, activating the ISR. May also required for the induction of death receptor-mediated apoptosis through the regulation of caspase activation. In terms of biological role, protein kinase activator that activates the ISR in response to iron deficiency: iron deficiency impairs mitochondrial import, promoting DELE1 localization at the mitochondrial surface, where it binds and activates EIF2AK1/HRI to trigger the ISR. Protein kinase activator generated by protein cleavage in response to mitochondrial stress, which accumulates in the cytosol and specifically binds to and activates the protein kinase activity of EIF2AK1/HRI. It thereby activates the integrated stress response (ISR): EIF2AK1/HRI activation promotes eIF-2-alpha (EIF2S1) phosphorylation, leading to a decrease in global protein synthesis and the induction of selected genes, including the transcription factor ATF4, the master transcriptional regulator of the ISR. Also acts as an activator of PRKN-independent mitophagy: activates the protein kinase activity of EIF2AK1/HRI in response to mitochondrial damage, promoting eIF-2-alpha (EIF2S1) phosphorylation, leading to mitochondrial localization of EIF2S1 followed by induction of mitophagy. The protein is DAP3-binding cell death enhancer 1 of Mus musculus (Mouse).